The primary structure comprises 1549 residues: Ferredoxin-dependent glutamate synthase (1549 aa).

Catalysis depends on Cys37, which acts as the For GATase activity. The Glutamine amidotransferase type-2 domain maps to 37-435 (CGVGFIAHLD…PGEMIVLDLQ (399 aa)). An FMN-binding site is contributed by 1116-1173 (LHEVHCLLVENNLREKVILRVDGGLRTGQDVVMAALLGADEYGFGTIAMIAGGCIMAR). Residues Cys1169, Cys1175, and Cys1180 each coordinate [3Fe-4S] cluster.

It belongs to the glutamate synthase family. Monomer. It depends on [3Fe-4S] cluster as a cofactor. Requires FAD as cofactor. FMN serves as cofactor.

The protein localises to the plastid. The protein resides in the chloroplast stroma. It catalyses the reaction 2 oxidized [2Fe-2S]-[ferredoxin] + 2 L-glutamate = L-glutamine + 2 reduced [2Fe-2S]-[ferredoxin] + 2-oxoglutarate + 2 H(+). It participates in amino-acid biosynthesis; L-glutamate biosynthesis via GLT pathway; L-glutamate from 2-oxoglutarate and L-glutamine (ferredoxin route): step 1/1. The protein operates within energy metabolism; nitrogen metabolism. The polypeptide is Ferredoxin-dependent glutamate synthase (gltB) (Cyanidium caldarium (Red alga)).